Reading from the N-terminus, the 500-residue chain is Probable glycine dehydrogenase (decarboxylating) subunit 2 (500 aa).

Residue lysine 273 is modified to N6-(pyridoxal phosphate)lysine.

Belongs to the GcvP family. C-terminal subunit subfamily. The glycine cleavage system is composed of four proteins: P, T, L and H. In this organism, the P 'protein' is a heterodimer of two subunits. Requires pyridoxal 5'-phosphate as cofactor.

It carries out the reaction N(6)-[(R)-lipoyl]-L-lysyl-[glycine-cleavage complex H protein] + glycine + H(+) = N(6)-[(R)-S(8)-aminomethyldihydrolipoyl]-L-lysyl-[glycine-cleavage complex H protein] + CO2. The glycine cleavage system catalyzes the degradation of glycine. The P protein binds the alpha-amino group of glycine through its pyridoxal phosphate cofactor; CO(2) is released and the remaining methylamine moiety is then transferred to the lipoamide cofactor of the H protein. The chain is Probable glycine dehydrogenase (decarboxylating) subunit 2 from Rhodopirellula baltica (strain DSM 10527 / NCIMB 13988 / SH1).